Here is a 935-residue protein sequence, read N- to C-terminus: Formin-I (935 aa).

A coiled-coil region spans residues 35 to 76 (QQQQQQQQQQINNENENSINNQENKENNNKDNNNNNNKEIKQ). 3 disordered regions span residues 52–78 (SINN…KQSS), 380–511 (LSSA…QLTP), and 561–590 (KEKM…QSLS). Residues 384–407 (KKQPQQQPQKDVTSSSSSSSNSSS) are compositionally biased toward low complexity. Positions 418 to 428 (ITTNDSSSSNP) are enriched in polar residues. The span at 431–443 (DFDKLSLSSDDKV) shows a compositional bias: basic and acidic residues. A compositionally biased stretch (polar residues) spans 444–454 (NNNNVQIENTT). Positions 444–505 (NNNNVQIENT…KPNNSGGGGG (62 aa)) constitute an FH1 domain. Residues 456-482 (SVPPPPPVGAPPPPPPPPPPPPPPPPS) are compositionally biased toward pro residues. Positions 484–499 (LKLNRNRISTPKKPNN) are enriched in polar residues. The FH2 domain maps to 506-935 (GGQLTPLQKK…SLNLSTLNSK (430 aa)). The segment covering 568 to 583 (NLNNSNNNNNNNSNNN) has biased composition (low complexity). 2 coiled-coil regions span residues 702 to 730 (SLLD…FIKV) and 803 to 834 (QSSL…QQLL).

The protein belongs to the formin homology family. Diaphanous subfamily.

Its function is as follows. Formins play an important role in the nucleation of actin and the formation of linear actin filaments. In Dictyostelium discoideum (Social amoeba), this protein is Formin-I (forI).